The following is a 337-amino-acid chain: Draxin (337 aa).

The signal sequence occupies residues 1–24; the sequence is MLLLALLLLLELSLAGSLGPGSSA. Disordered regions lie at residues 36 to 67, 107 to 133, and 234 to 261; these read GPAL…WTQD, RPYP…KRRK, and WPST…KGEP. Composition is skewed to basic residues over residues 122 to 133 and 237 to 246; these read VKKRGREHKRRK and TRKKEKHRGK. Residue asparagine 252 is glycosylated (N-linked (GlcNAc...) asparagine).

Belongs to the draxin family. As to quaternary structure, interacts with LRP6.

It is found in the secreted. Its function is as follows. Chemorepulsive axon guidance protein required for the development of spinal cord and forebrain commissures. Acts as a chemorepulsive guidance protein for commissural axons during development. Able to inhibit or repel neurite outgrowth from dorsal spinal cord. Inhibits the stabilization of cytosolic beta-catenin (CTNNB1) via its interaction with LRP6, thereby acting as an antagonist of Wnt signaling pathway. The sequence is that of Draxin from Bos taurus (Bovine).